We begin with the raw amino-acid sequence, 616 residues long: Chaperone protein HscA (616 aa).

It belongs to the heat shock protein 70 family.

Chaperone involved in the maturation of iron-sulfur cluster-containing proteins. Has a low intrinsic ATPase activity which is markedly stimulated by HscB. Involved in the maturation of IscU. In Salmonella paratyphi A (strain ATCC 9150 / SARB42), this protein is Chaperone protein HscA.